Here is a 261-residue protein sequence, read N- to C-terminus: Zinc import ATP-binding protein ZnuC (261 aa).

The region spanning 6–227 (IQLNNIHLRF…PEYLKLFGKQ (222 aa)) is the ABC transporter domain. 38-45 (GPNGAGKS) serves as a coordination point for ATP.

It belongs to the ABC transporter superfamily. Zinc importer (TC 3.A.1.15.5) family. In terms of assembly, the complex is composed of two ATP-binding proteins (ZnuC), two transmembrane proteins (ZnuB) and a solute-binding protein (ZnuA).

The protein localises to the cell inner membrane. The catalysed reaction is Zn(2+)(out) + ATP(in) + H2O(in) = Zn(2+)(in) + ADP(in) + phosphate(in) + H(+)(in). Its function is as follows. Part of the ABC transporter complex ZnuABC involved in zinc import. Responsible for energy coupling to the transport system. The sequence is that of Zinc import ATP-binding protein ZnuC from Saccharophagus degradans (strain 2-40 / ATCC 43961 / DSM 17024).